Consider the following 360-residue polypeptide: Phospho-N-acetylmuramoyl-pentapeptide-transferase (360 aa).

10 helical membrane-spanning segments follow: residues 26–46, 72–92, 94–114, 132–152, 168–188, 199–219, 236–256, 263–283, 288–308, and 338–358; these read AIVS…RMIA, PTMG…LWAY, SNPY…VGFV, WKYF…YMIG, VMPQ…VGTS, GLAI…AWAT, AGEL…FLWF, VFMG…IAVL, FLLV…ILQV, and VIVR…ATLK.

This sequence belongs to the glycosyltransferase 4 family. MraY subfamily. Requires Mg(2+) as cofactor.

The protein resides in the cell inner membrane. The catalysed reaction is UDP-N-acetyl-alpha-D-muramoyl-L-alanyl-gamma-D-glutamyl-meso-2,6-diaminopimeloyl-D-alanyl-D-alanine + di-trans,octa-cis-undecaprenyl phosphate = di-trans,octa-cis-undecaprenyl diphospho-N-acetyl-alpha-D-muramoyl-L-alanyl-D-glutamyl-meso-2,6-diaminopimeloyl-D-alanyl-D-alanine + UMP. It participates in cell wall biogenesis; peptidoglycan biosynthesis. Catalyzes the initial step of the lipid cycle reactions in the biosynthesis of the cell wall peptidoglycan: transfers peptidoglycan precursor phospho-MurNAc-pentapeptide from UDP-MurNAc-pentapeptide onto the lipid carrier undecaprenyl phosphate, yielding undecaprenyl-pyrophosphoryl-MurNAc-pentapeptide, known as lipid I. This is Phospho-N-acetylmuramoyl-pentapeptide-transferase from Erwinia tasmaniensis (strain DSM 17950 / CFBP 7177 / CIP 109463 / NCPPB 4357 / Et1/99).